The chain runs to 154 residues: Transcriptional repressor NrdR (154 aa).

A zinc finger lies at 3-34 (CPFCGNENTRVIDTRAAEDGFAIKRRRECENC). The region spanning 49–139 (LIVVKKDGSK…VYRQFKDVNS (91 aa)) is the ATP-cone domain.

It belongs to the NrdR family. Zn(2+) serves as cofactor.

In terms of biological role, negatively regulates transcription of bacterial ribonucleotide reductase nrd genes and operons by binding to NrdR-boxes. This chain is Transcriptional repressor NrdR, found in Carboxydothermus hydrogenoformans (strain ATCC BAA-161 / DSM 6008 / Z-2901).